The primary structure comprises 376 residues: Thymidine kinase (376 aa).

Positions 1-39 are disordered; that stretch reads MASYPCHQHASAFDQAARSRGHSNRRTALRPRRQQEATE. Residues 19–32 show a composition bias toward basic residues; the sequence is SRGHSNRRTALRPR. 56 to 63 provides a ligand contact to ATP; the sequence is GPHGMGKT. Catalysis depends on Glu-83, which acts as the Proton acceptor. Substrate contacts are provided by Tyr-101 and Gln-125. Arg-216 is an ATP binding site. Arg-222 lines the substrate pocket.

It belongs to the herpesviridae thymidine kinase family. In terms of assembly, homodimer.

It catalyses the reaction thymidine + ATP = dTMP + ADP + H(+). In terms of biological role, catalyzes the transfer of the gamma-phospho group of ATP to thymidine to generate dTMP in the salvage pathway of pyrimidine synthesis. The dTMP serves as a substrate for DNA polymerase during viral DNA replication. Allows the virus to be reactivated and to grow in non-proliferative cells lacking a high concentration of phosphorylated nucleic acid precursors. In Human herpesvirus 1 (strain CL101) (HHV-1), this protein is Thymidine kinase.